An 874-amino-acid polypeptide reads, in one-letter code: Alanine--tRNA ligase (874 aa).

Zn(2+) is bound by residues histidine 564, histidine 568, cysteine 665, and histidine 669.

Belongs to the class-II aminoacyl-tRNA synthetase family. Requires Zn(2+) as cofactor.

It is found in the cytoplasm. It carries out the reaction tRNA(Ala) + L-alanine + ATP = L-alanyl-tRNA(Ala) + AMP + diphosphate. Functionally, catalyzes the attachment of alanine to tRNA(Ala) in a two-step reaction: alanine is first activated by ATP to form Ala-AMP and then transferred to the acceptor end of tRNA(Ala). Also edits incorrectly charged Ser-tRNA(Ala) and Gly-tRNA(Ala) via its editing domain. This Cupriavidus metallidurans (strain ATCC 43123 / DSM 2839 / NBRC 102507 / CH34) (Ralstonia metallidurans) protein is Alanine--tRNA ligase.